A 254-amino-acid polypeptide reads, in one-letter code: MAIANKNIIFVAGLGGIGLDTSREIVKSGPKNLVILDRIDNPAAIAELKAINPKVTVTFYPYDVTVSVAESTKLLKVIFDKLKTVDLLINGAGILDDYQIERTIAVNFAGTVNTTTAIMAFWDKRKGGPGGVIANICSVTGFNAIYQVPVYSASKAAALSFTNSLAKLAPITGVTAYSINPGITKTTLVHKFNSWLDVEPRVAELLLEHPTQTSLQCAQNFVKAIEANQNGAIWKLDLGRLEAIEWTKHWDSGI.

An NAD(+)-binding site is contributed by 10–33 (FVAGLGGIGLDTSREIVKSGPKNL). Ser-138 provides a ligand contact to substrate. Tyr-151 acts as the Proton acceptor in catalysis.

This sequence belongs to the short-chain dehydrogenases/reductases (SDR) family. In terms of assembly, homodimer.

It carries out the reaction a primary alcohol + NAD(+) = an aldehyde + NADH + H(+). It catalyses the reaction a secondary alcohol + NAD(+) = a ketone + NADH + H(+). The chain is Alcohol dehydrogenase 1 (Adh1) from Drosophila hydei (Fruit fly).